The chain runs to 210 residues: Thymidylate kinase (210 aa).

13–20 (GLEGAGKS) serves as a coordination point for ATP.

It belongs to the thymidylate kinase family.

It carries out the reaction dTMP + ATP = dTDP + ADP. In terms of biological role, phosphorylation of dTMP to form dTDP in both de novo and salvage pathways of dTTP synthesis. This is Thymidylate kinase from Shewanella loihica (strain ATCC BAA-1088 / PV-4).